Consider the following 364-residue polypeptide: Probable UDP-arabinopyranose mutase 1 (364 aa).

Positions 103–105 match the DXD motif motif; sequence DDD. An N-linked (Glc...) arginine glycan is attached at arginine 151.

It belongs to the RGP family. As to quaternary structure, homopentamer or homohexamer. It depends on Mn(2+) as a cofactor. Requires Mg(2+) as cofactor. In terms of processing, reversibly glycosylated by UDP-glucose, UDP-xylose and UDP-galactose, but not UDP-mannose.

Its subcellular location is the secreted. The protein resides in the cell wall. It is found in the cell junction. The protein localises to the plasmodesma. It localises to the golgi apparatus. It carries out the reaction UDP-beta-L-arabinofuranose = UDP-beta-L-arabinopyranose. Inhibited by inhibitor protein (IP) which may be a form of sucrose synthase. Probable UDP-L-arabinose mutase involved in the biosynthesis of cell wall non-cellulosic polysaccharides. Was initially shown to possess an autoglycosylating activity which is dependent on the presence of UDP-glucose and manganese. This Pisum sativum (Garden pea) protein is Probable UDP-arabinopyranose mutase 1.